We begin with the raw amino-acid sequence, 213 residues long: Ribonuclease HII (213 aa).

The RNase H type-2 domain occupies 1–213 (MKIIGIDEAG…SWKTAQKFIQ (213 aa)). Asp7, Glu8, and Asp105 together coordinate a divalent metal cation.

The protein belongs to the RNase HII family. It depends on Mn(2+) as a cofactor. Mg(2+) serves as cofactor.

The protein resides in the cytoplasm. The enzyme catalyses Endonucleolytic cleavage to 5'-phosphomonoester.. Its function is as follows. Endonuclease that specifically degrades the RNA of RNA-DNA hybrids. This is Ribonuclease HII from Methanococcoides burtonii (strain DSM 6242 / NBRC 107633 / OCM 468 / ACE-M).